Here is a 159-residue protein sequence, read N- to C-terminus: Transcription elongation factor GreA (159 aa).

This sequence belongs to the GreA/GreB family.

Its function is as follows. Necessary for efficient RNA polymerase transcription elongation past template-encoded arresting sites. The arresting sites in DNA have the property of trapping a certain fraction of elongating RNA polymerases that pass through, resulting in locked ternary complexes. Cleavage of the nascent transcript by cleavage factors such as GreA or GreB allows the resumption of elongation from the new 3'terminus. GreA releases sequences of 2 to 3 nucleotides. The polypeptide is Transcription elongation factor GreA (Psychromonas ingrahamii (strain DSM 17664 / CCUG 51855 / 37)).